The sequence spans 504 residues: D-alanine--D-alanyl carrier protein ligase (504 aa).

ATP is bound at residue 152–153 (TS). Position 197 (D197) interacts with D-alanine. 292-297 (NTYGPT) contributes to the ATP binding site. Position 301 (V301) interacts with D-alanine. Residues D383, 394-397 (YNGR), and K492 each bind ATP. K492 serves as a coordination point for D-alanine.

The protein belongs to the ATP-dependent AMP-binding enzyme family. DltA subfamily.

It is found in the cytoplasm. The enzyme catalyses holo-[D-alanyl-carrier protein] + D-alanine + ATP = D-alanyl-[D-alanyl-carrier protein] + AMP + diphosphate. It functions in the pathway cell wall biogenesis; lipoteichoic acid biosynthesis. Catalyzes the first step in the D-alanylation of lipoteichoic acid (LTA), the activation of D-alanine and its transfer onto the D-alanyl carrier protein (Dcp) DltC. In an ATP-dependent two-step reaction, forms a high energy D-alanyl-AMP intermediate, followed by transfer of the D-alanyl residue as a thiol ester to the phosphopantheinyl prosthetic group of the Dcp. D-alanylation of LTA plays an important role in modulating the properties of the cell wall in Gram-positive bacteria, influencing the net charge of the cell wall. This Bacillus cytotoxicus (strain DSM 22905 / CIP 110041 / 391-98 / NVH 391-98) protein is D-alanine--D-alanyl carrier protein ligase.